A 213-amino-acid chain; its full sequence is Urease accessory protein UreG (213 aa).

Residue 17-24 participates in GTP binding; the sequence is GPVGSGKT.

Belongs to the SIMIBI class G3E GTPase family. UreG subfamily. Homodimer. UreD, UreF and UreG form a complex that acts as a GTP-hydrolysis-dependent molecular chaperone, activating the urease apoprotein by helping to assemble the nickel containing metallocenter of UreC. The UreE protein probably delivers the nickel.

The protein resides in the cytoplasm. Functionally, facilitates the functional incorporation of the urease nickel metallocenter. This process requires GTP hydrolysis, probably effectuated by UreG. This Delftia acidovorans (strain DSM 14801 / SPH-1) protein is Urease accessory protein UreG.